The primary structure comprises 93 residues: Bublin coiled-coil protein (93 aa).

Disordered stretches follow at residues 1 to 26 (MAGP…GDTF) and 74 to 93 (QQQS…QPPA). Positions 17–26 (DEGDEGGDTF) are enriched in acidic residues. Residues 59–80 (LKELLESNRQTRLEFQQQSKQL) adopt a coiled-coil conformation.

It belongs to the UPF0184 (EST00098) family.

The protein resides in the cell junction. It localises to the cytoplasm. Its subcellular location is the cytoskeleton. Its function is as follows. Essential for intermediate filament organization in intestinal cells, interacts with intermediate filament and regulates intestinal lumen morphology. The protein is Bublin coiled-coil protein (BBLN) of Taeniopygia guttata (Zebra finch).